The following is a 948-amino-acid chain: Receptor-like protein 45 (948 aa).

A signal peptide spans Met-1 to Ser-26. At Cys-27–Asp-897 the chain is on the extracellular side. 2 N-linked (GlcNAc...) asparagine glycosylation sites follow: Asn-99 and Asn-113. LRR repeat units lie at residues Phe-106–Gly-129 and Leu-135–Leu-162. The stretch at Lys-163–Asn-183 is one LRR 3; degenerate repeat. Residue Asn-183 is glycosylated (N-linked (GlcNAc...) asparagine). LRR repeat units follow at residues Leu-184–Asn-208, Arg-210–Arg-233, Leu-234–Arg-257, Phe-258–Ser-284, Glu-286–Glu-306, Leu-307–Gly-332, Gln-334–Gln-357, Gln-358–Asn-381, Asn-382–Met-404, Arg-405–Leu-429, Ala-430–Met-453, Glu-454–Gly-477, Tyr-479–Glu-502, Thr-503–Leu-526, Arg-527–Asn-549, Phe-550–Ile-573, Tyr-575–Ser-595, Ser-596–Trp-618, Tyr-619–Ser-640, Pro-642–Leu-665, Ser-666–Leu-689, Leu-758–Leu-782, Lys-783–Asn-805, Arg-807–Gln-831, and Leu-833–Thr-855. N-linked (GlcNAc...) asparagine glycosylation occurs at Asn-328. Asn-381 and Asn-392 each carry an N-linked (GlcNAc...) asparagine glycan. 2 N-linked (GlcNAc...) asparagine glycosylation sites follow: Asn-436 and Asn-465. N-linked (GlcNAc...) asparagine glycosylation is present at Asn-608. N-linked (GlcNAc...) asparagine glycosylation is found at Asn-653, Asn-679, and Asn-688. Residue Asn-789 is glycosylated (N-linked (GlcNAc...) asparagine). N-linked (GlcNAc...) asparagine glycans are attached at residues Asn-837 and Asn-842. A helical membrane pass occupies residues Ile-898–Val-918. At Phe-919–Ile-948 the chain is on the cytoplasmic side.

The protein belongs to the RLP family.

It localises to the cell membrane. The polypeptide is Receptor-like protein 45 (Arabidopsis thaliana (Mouse-ear cress)).